The sequence spans 272 residues: GPN-loop GTPase 3 (272 aa).

Residue 13–18 participates in GTP binding; sequence GAGKST. The short motif at 70–72 is the Gly-Pro-Asn (GPN)-loop; involved in dimer interface element; it reads GPN. 173–176 is a binding site for GTP; it reads SKLD.

Belongs to the GPN-loop GTPase family. In terms of assembly, heterodimers with NPA3/GPN1 or GPN2. Binds to RNA polymerase II (RNAPII).

Functionally, small GTPase required for proper nuclear localization of RNA polymerase II and III (RNAPII and RNAPIII). May act at an RNAP assembly step prior to nuclear import. Promotes sister chromatid separation during anaphase. The protein is GPN-loop GTPase 3 of Saccharomyces cerevisiae (strain ATCC 204508 / S288c) (Baker's yeast).